A 138-amino-acid chain; its full sequence is Histone H2A.Z (138 aa).

Over residues 1-10 the composition is skewed to gly residues; it reads MSSKVGGGKG. The interval 1–21 is disordered; sequence MSSKVGGGKGGKSKTSSEAKV. Residues lysine 4 and lysine 9 each carry the N6-acetyllysine modification.

The protein belongs to the histone H2A family. In terms of assembly, the nucleosome is a histone octamer containing two molecules each of H2A, H2B, H3 and H4 assembled in one H3-H4 heterotetramer and two H2A-H2B heterodimers. The octamer wraps approximately 147 bp of DNA. H2A or its variant H2A.Z forms a heterodimer with H2B. H2A.Z associates with the VPS72/SWC2 subunit of the SWR1 chromatin remodeling complex. Also interacts with RBP1/DNA-directed RNA polymerase II largest subunit. Acetylated once deposited into chromatin.

It is found in the nucleus. The protein resides in the chromosome. In terms of biological role, variant histone H2A which can replace H2A in some nucleosomes. Nucleosomes wrap and compact DNA into chromatin, limiting DNA accessibility to the cellular machineries which require DNA as a template. Histones thereby play a central role in transcription regulation, DNA repair, DNA replication and chromosomal stability. DNA accessibility is regulated via a complex set of post-translational modifications of histones, also called histone code, and nucleosome remodeling. This variant is enriched at promoters, it may keep them in a repressed state until the appropriate activation signal is received. Near telomeres, it may counteract gene silencing caused by the spread of heterochromatin proteins. Required for the RNA polymerase II and SPT15/TBP recruitment to the target genes. Involved in chromosome stability. The chain is Histone H2A.Z (HTZ1) from Cryptococcus neoformans var. neoformans serotype D (strain B-3501A) (Filobasidiella neoformans).